The primary structure comprises 714 residues: Ribonucleoside-diphosphate reductase 2 subunit alpha (714 aa).

Substrate is bound by residues Thr161, 177–178 (SC), Gly206, 386–390 (NLCSE), and 588–592 (PTGSI). Cys178 and Cys415 are oxidised to a cystine. Residue Asn386 is the Proton acceptor of the active site. Cys388 acts as the Cysteine radical intermediate in catalysis. The active-site Proton acceptor is the Glu390.

Belongs to the ribonucleoside diphosphate reductase large chain family. As to quaternary structure, tetramer of two alpha and two beta subunits.

It catalyses the reaction a 2'-deoxyribonucleoside 5'-diphosphate + [thioredoxin]-disulfide + H2O = a ribonucleoside 5'-diphosphate + [thioredoxin]-dithiol. With respect to regulation, under complex allosteric control mediated by deoxynucleoside triphosphates and ATP binding. The type of nucleotide bound at the specificity site determines substrate preference. It seems probable that ATP makes the enzyme reduce CDP and UDP, dGTP favors ADP reduction and dTTP favors GDP reduction. Lacks the N-terminal activity site. Functionally, provides the precursors necessary for DNA synthesis. Catalyzes the biosynthesis of deoxyribonucleotides from the corresponding ribonucleotides. R1E contains the binding sites for both substrates and allosteric effectors and carries out the actual reduction of the ribonucleotide. The protein is Ribonucleoside-diphosphate reductase 2 subunit alpha (nrdE) of Salmonella typhimurium (strain LT2 / SGSC1412 / ATCC 700720).